The chain runs to 293 residues: Tyrosine recombinase XerD (293 aa).

The Core-binding (CB) domain maps to 1–83 (MHGLIADFIH…ALRKFYRFLL (83 aa)). A Tyr recombinase domain is found at 104–287 (HLPATLSGTE…SNQHLVAVYH (184 aa)). Catalysis depends on residues Arg144, Lys168, His239, Arg242, and His265. Tyr274 (O-(3'-phospho-DNA)-tyrosine intermediate) is an active-site residue.

Belongs to the 'phage' integrase family. XerD subfamily. Forms a cyclic heterotetrameric complex composed of two molecules of XerC and two molecules of XerD.

The protein resides in the cytoplasm. Its function is as follows. Site-specific tyrosine recombinase, which acts by catalyzing the cutting and rejoining of the recombining DNA molecules. The XerC-XerD complex is essential to convert dimers of the bacterial chromosome into monomers to permit their segregation at cell division. It also contributes to the segregational stability of plasmids. The polypeptide is Tyrosine recombinase XerD (Lacticaseibacillus casei (Lactobacillus casei)).